A 39-amino-acid chain; its full sequence is Histone H2A (39 aa).

Residues 1–18 show a composition bias toward basic residues; sequence AGRGKQGGKVRAKAKTRS. Residues 1-24 are disordered; sequence AGRGKQGGKVRAKAKTRSSRAGLQ. Lys-5 is subject to N6-(2-hydroxyisobutyryl)lysine. Lys-5 is subject to N6-acetyllysine. Lys-9 is subject to N6-(2-hydroxyisobutyryl)lysine; alternate. Lys-9 carries the N6-lactoyllysine; alternate modification. Lys-9 carries the post-translational modification N6-succinyllysine. Residues Lys-13 and Lys-15 each participate in a glycyl lysine isopeptide (Lys-Gly) (interchain with G-Cter in ubiquitin) cross-link. Residue Lys-36 is modified to N6-(2-hydroxyisobutyryl)lysine; alternate.

It belongs to the histone H2A family. The nucleosome is a histone octamer containing two molecules each of H2A, H2B, H3 and H4 assembled in one H3-H4 heterotetramer and two H2A-H2B heterodimers. The octamer wraps approximately 147 bp of DNA. In terms of processing, monoubiquitination of C-terminus gives a specific tag for epigenetic transcriptional repression. Following DNA double-strand breaks (DSBs), it is ubiquitinated through 'Lys-63' linkage of ubiquitin moieties.

The protein localises to the nucleus. It localises to the chromosome. In terms of biological role, core component of nucleosome. Nucleosomes wrap and compact DNA into chromatin, limiting DNA accessibility to the cellular machineries which require DNA as a template. Histones thereby play a central role in transcription regulation, DNA repair, DNA replication and chromosomal stability. DNA accessibility is regulated via a complex set of post-translational modifications of histones, also called histone code, and nucleosome remodeling. Buforins are strong antimicrobial activities in vitro against a broad-spectrum of microorganisms including fungi. Buforin II is more potent than buforin I. The polypeptide is Histone H2A (Bufo gargarizans (Asian toad)).